Reading from the N-terminus, the 902-residue chain is MASTCQRLSFYVSPLKRQLVSRPPVILWERLIPGCSRSIYSATGKWTKEYTLQTRKDVEKWWHQQIKEQASRVSEEDKLKPKFYLLSMFPYPSGKLHMGHVRVYTLSDTIARFQKMRGMQVINPMGWDAFGLPAENAAIERNLHPESWTQSNIKHMRKQLDRLGLCFSWDREITTCLPDYYKWTQYLFIKLYEAGLAYQKEALVNWDPVDQTVLANEQVNEYGCSWRSGAKVEKKYLRQWFIKTTAYAKAMQDALADLPEWYGIKGMQAHWIGDCVGCHLDFTLKVDGEDTGEKLTAYTATPEAIYGISHVAISPSHGLLHGCSSVKKALQKALVPGRDCLTPVMAVSMLTLQEVPIVIMANPDLEGSLDSKIGIPSTSSEDTRLAQALGLPYSEVIEASPDGTERLSGSAEFTGMTRQDAFVALTRKARGMRVGGHVTSNKLKDWLISRQRYWGTPIPIVHCPACGPVPVPLQDLPVILPSIASLTGRGGSPLATALEWVNCSCPRCKGSAKRETDTMDTFVDSAWYYFRYTDPHNTQSPFGSALADFWMPVDLYIGGKEHAVMHLFYARFLSHFCHDQKMVKHREPFHKLLAQGLIKGQTFRLPSGQCLKKEDIDFTGPAPVCAKTKEKLEVTWEKMSKSKHNGVDPEEIVAQYGIDTIRLYILFAAPPEKDILWDVKTDALPGVLRWQQRLWSLTTRFIEARTSGTVPQPQLLNSKEKTKAQNLWEYKNAVIAQVTTHFTEDFALNSVVSQLMGLSSALSQASQRVVLHSPEFEDALCALLVMAAPLAPHVTSELWAGLTLVPSKLCDHYAWDSGVMLQAWPTVDSQFLQKPDMVQMAVLINNKACGKIPVPQHVAQDQDKVHELVLQSELGMKLLQGRSIKKAFLSPRTALINFLVQE.

At K67 the chain carries N6-acetyllysine. Residues 91 to 101 (YPSGKLHMGHV) carry the 'HIGH' region motif. The residue at position 235 (K235) is an N6-acetyllysine. The 'KMSKS' region motif lies at 638 to 642 (KMSKS). An ATP-binding site is contributed by K641.

This sequence belongs to the class-I aminoacyl-tRNA synthetase family.

Its subcellular location is the mitochondrion matrix. It catalyses the reaction tRNA(Leu) + L-leucine + ATP = L-leucyl-tRNA(Leu) + AMP + diphosphate. The chain is Probable leucine--tRNA ligase, mitochondrial (Lars2) from Mus musculus (Mouse).